Reading from the N-terminus, the 31-residue chain is Cytochrome b6-f complex subunit 6 (31 aa).

A helical membrane pass occupies residues 4 to 26 (LTSYFGFLLAALTITSALFIGLS).

Belongs to the PetL family. The 4 large subunits of the cytochrome b6-f complex are cytochrome b6, subunit IV (17 kDa polypeptide, PetD), cytochrome f and the Rieske protein, while the 4 small subunits are PetG, PetL, PetM and PetN. The complex functions as a dimer.

The protein localises to the plastid. Its subcellular location is the chloroplast thylakoid membrane. Functionally, component of the cytochrome b6-f complex, which mediates electron transfer between photosystem II (PSII) and photosystem I (PSI), cyclic electron flow around PSI, and state transitions. PetL is important for photoautotrophic growth as well as for electron transfer efficiency and stability of the cytochrome b6-f complex. This is Cytochrome b6-f complex subunit 6 from Aethionema cordifolium (Lebanon stonecress).